The chain runs to 144 residues: Maximins 3/H11 type 1 (144 aa).

The first 18 residues, 1 to 18, serve as a signal peptide directing secretion; sequence MNFKYIVAVSFLIASAYA. Propeptides lie at residues 19–43 and 73–122; these read RSVQ…REIR and RTAE…KKEK. The residue at position 143 (I143) is an Isoleucine amide.

It belongs to the bombinin family. Expressed by the skin glands.

The protein resides in the secreted. Maximin-3 shows antibacterial activity against both Gram-positive and Gram-negative bacteria. It also shows antimicrobial activity against the fungus C.albicans, but not against A.flavus nor P.uticale. It has little hemolytic activity. It possess a significant cytotoxicity against tumor cell lines. It possess a significant anti-HIV activity. It shows high spermicidal activity. In terms of biological role, maximin-H11 shows antimicrobial activity against bacteria and against the fungus C.albicans. Shows strong hemolytic activity. The sequence is that of Maximins 3/H11 type 1 from Bombina maxima (Giant fire-bellied toad).